Here is a 400-residue protein sequence, read N- to C-terminus: Large envelope protein (400 aa).

Met1 carries the post-translational modification N-acetylmethionine. Residue Gly2 is the site of N-myristoyl glycine; by host attachment. The interval 2–119 (GAPLSTARRG…PPLRDTHPQA (118 aa)) is pre-S1. A pre-S region spans residues 2–174 (GAPLSTARRG…FSKTGDPAMN (173 aa)). Residues 2-181 (GAPLSTARRG…AMNMENITSG (180 aa)) are Virion surface; in external conformation-facing. Residues 2–253 (GAPLSTARRG…PGYRWMCLRR (252 aa)) are Intravirion; in internal conformation-facing. An N-linked (GlcNAc...) asparagine glycan is attached at Pro4. The disordered stretch occupies residues 70–115 (PHGGLLGWSPQAQGILTTSPPDPPPASTNRRSGRKPTPVSPPLRDT). Over residues 79 to 88 (PQAQGILTTS) the composition is skewed to polar residues. The pre-S2 stretch occupies residues 120 to 174 (MQWNSTQFHQALLDPRVRGLYFPAGGSSSETQNPAPTIASLTSSIFSKTGDPAMN). The chain crosses the membrane as a helical span at residues 182 to 202 (LLRPLLVLQAVCFLLTKILTI). At 203–253 (PQSLDSWWTSLNFLGVPPGCPGQNSQSPISNHLPTSCPPTCPGYRWMCLRR) the chain is on the intravirion; in external conformation side. The chain crosses the membrane as a helical span at residues 254 to 274 (FIIFLFILLLCLIFLLVLLDY). Topologically, residues 275–348 (QGMLPVCPLL…WASARFSWLS (74 aa)) are virion surface. Asn320 carries an N-linked (GlcNAc...) asparagine; by host glycan. The helical transmembrane segment at 349–369 (LLVQFVQWCVGLSPTVWLLVI) threads the bilayer. The Intravirion segment spans residues 370-375 (WMIWYW). Residues 376 to 398 (GPNLCSILSPFIPLLPIFCYLWA) traverse the membrane as a helical segment. The Virion surface portion of the chain corresponds to 399–400 (SI).

This sequence belongs to the orthohepadnavirus major surface antigen family. In terms of assembly, in its internal form (Li-HBsAg), interacts with the capsid protein and with the isoform S. Interacts with host chaperone CANX. As to quaternary structure, associates with host chaperone CANX through its pre-S2 N glycan; this association may be essential for isoform M proper secretion. Interacts with isoform L. Interacts with the antigens of satellite virus HDV (HDVAgs); this interaction is required for encapsidation of HDV genomic RNA. In terms of processing, isoform M is N-terminally acetylated by host at a ratio of 90%, and N-glycosylated by host at the pre-S2 region. Post-translationally, myristoylated.

Its subcellular location is the virion membrane. In terms of biological role, the large envelope protein exists in two topological conformations, one which is termed 'external' or Le-HBsAg and the other 'internal' or Li-HBsAg. In its external conformation the protein attaches the virus to cell receptors and thereby initiating infection. This interaction determines the species specificity and liver tropism. This attachment induces virion internalization predominantly through caveolin-mediated endocytosis. The large envelope protein also assures fusion between virion membrane and endosomal membrane. In its internal conformation the protein plays a role in virion morphogenesis and mediates the contact with the nucleocapsid like a matrix protein. Its function is as follows. The middle envelope protein plays an important role in the budding of the virion. It is involved in the induction of budding in a nucleocapsid independent way. In this process the majority of envelope proteins bud to form subviral lipoprotein particles of 22 nm of diameter that do not contain a nucleocapsid. The chain is Large envelope protein from Hepatitis B virus genotype H (isolate United States/LAS2523/2002) (HBV-H).